The primary structure comprises 264 residues: Protein GrpE (264 aa).

A compositionally biased stretch (basic and acidic residues) spans 36-49; it reads KVQSKKVSSDHSSS. The tract at residues 36 to 59 is disordered; that stretch reads KVQSKKVSSDHSSSEDNASSDINS. Over residues 50–59 the composition is skewed to low complexity; it reads EDNASSDINS.

Belongs to the GrpE family. As to quaternary structure, homodimer.

Its subcellular location is the cytoplasm. Its function is as follows. Participates actively in the response to hyperosmotic and heat shock by preventing the aggregation of stress-denatured proteins, in association with DnaK and GrpE. It is the nucleotide exchange factor for DnaK and may function as a thermosensor. Unfolded proteins bind initially to DnaJ; upon interaction with the DnaJ-bound protein, DnaK hydrolyzes its bound ATP, resulting in the formation of a stable complex. GrpE releases ADP from DnaK; ATP binding to DnaK triggers the release of the substrate protein, thus completing the reaction cycle. Several rounds of ATP-dependent interactions between DnaJ, DnaK and GrpE are required for fully efficient folding. This chain is Protein GrpE, found in Peanut witches'-broom phytoplasma.